A 324-amino-acid polypeptide reads, in one-letter code: Glucosyl-3-phosphoglycerate synthase (324 aa).

UDP-alpha-D-glucose is bound by residues 50–54 (PALNE), serine 81, lysine 114, and 134–135 (DS). A Mn(2+)-binding site is contributed by aspartate 136. Position 184-187 (184-187 (GRVT)) interacts with (2R)-3-phosphoglycerate. UDP-alpha-D-glucose is bound by residues 229–232 (YGVE) and 256–261 (RAHRNR). Histidine 258 lines the Mn(2+) pocket. A (2R)-3-phosphoglycerate-binding site is contributed by asparagine 260.

Belongs to the glycosyltransferase 2 family. Homotrimer. Requires Mg(2+) as cofactor. Mn(2+) is required as a cofactor.

The catalysed reaction is an NDP-alpha-D-glucose + (2R)-3-phosphoglycerate = (2R)-2-O-(alpha-D-glucopyranosyl)-3-phospho-glycerate + a ribonucleoside 5'-diphosphate + H(+). It catalyses the reaction (2R)-3-phosphoglycerate + UDP-alpha-D-glucose = (2R)-2-O-(alpha-D-glucopyranosyl)-3-phospho-glycerate + UDP + H(+). The enzyme catalyses ADP-alpha-D-glucose + (2R)-3-phosphoglycerate = (2R)-2-O-(alpha-D-glucopyranosyl)-3-phospho-glycerate + ADP + H(+). It carries out the reaction GDP-D-glucose + (2R)-3-phosphoglycerate = (2R)-2-O-(alpha-D-glucopyranosyl)-3-phospho-glycerate + GDP + H(+). Its function is as follows. Involved in the biosynthesis of 6-O-methylglucose lipopolysaccarides (MGLPs). Catalyzes the transfer of the glucose moiety from a nuleotide sugar such as UDP-alpha-D-glucose to the position 2 of 3-phospho-D-glycerate (3-PGA) to form glucosyl-3-phosphoglycerate (GPG). It can use UDP-glucose, ADP-glucose and GDP-glucose as sugar donor substrates with decreasing affinity and with 3-PGA as an acceptor. D-glycerate can only be an acceptor with ADP-glucose and at a very low rate. This Mycobacterium bovis (strain ATCC BAA-935 / AF2122/97) protein is Glucosyl-3-phosphoglycerate synthase (gpgS).